Consider the following 242-residue polypeptide: 3-deoxy-manno-octulosonate cytidylyltransferase (242 aa).

This sequence belongs to the KdsB family.

The protein localises to the cytoplasm. The catalysed reaction is 3-deoxy-alpha-D-manno-oct-2-ulosonate + CTP = CMP-3-deoxy-beta-D-manno-octulosonate + diphosphate. The protein operates within nucleotide-sugar biosynthesis; CMP-3-deoxy-D-manno-octulosonate biosynthesis; CMP-3-deoxy-D-manno-octulosonate from 3-deoxy-D-manno-octulosonate and CTP: step 1/1. It participates in bacterial outer membrane biogenesis; lipopolysaccharide biosynthesis. Its function is as follows. Activates KDO (a required 8-carbon sugar) for incorporation into bacterial lipopolysaccharide in Gram-negative bacteria. This is 3-deoxy-manno-octulosonate cytidylyltransferase from Anaeromyxobacter dehalogenans (strain 2CP-C).